Consider the following 435-residue polypeptide: MASKSTVTTLTIFFFFFFFFIEPKVQSQQISAVDSECTNRWIHIRTLPSRFNLDLLSTCNRYPITDDLCPYLANHGLGPKTHTRTRSWYRTDPLLLELIFHRRILEYPCLTPDPNLASAIYLPYYAGIDSLRYLYGPDLNSSADHGSDLLEFLTRDQPEIWSRRSGHDHFLVMARPAWDFSQPLTVDPPIWGTSFLERREFFNLTALTLESRYWPWQEQAVPYPTSFHPHSLPFLESWIRRVRRSRRTSLMLFAGGGGTSSSPNIRRSIRLECTSINATQSDNKICDFVDCSNGICEHDPIRFMRPMLQSSFCLQPPGDTPTRKATFDGIIAGCIPVFFEDQTAKMQYKWHLPESEFAEFSVTIPKEDVVFRGVRIQDVLMSIPKEEVTRMRERVIEMMPRVMYRRHGASMGLMNKKDAVDIAIDGVLDRIISRV.

Over 1–6 the chain is Cytoplasmic; sequence MASKST. Residues 7–23 form a helical; Signal-anchor for type II membrane protein membrane-spanning segment; that stretch reads VTTLTIFFFFFFFFIEP. The Lumenal segment spans residues 24-435; that stretch reads KVQSQQISAV…GVLDRIISRV (412 aa). 3 N-linked (GlcNAc...) asparagine glycosylation sites follow: N140, N203, and N277.

This sequence belongs to the glycosyltransferase 47 family. In terms of tissue distribution, expressed in roots, hypocotyls, cotyledons, leaves, stems, stamens and pollen grains.

It is found in the golgi apparatus membrane. Functionally, functions in xyloglucan synthesis by adding side chains to the xylosylated glucan backbone. Involved in the galactosylation of hemicellulose xyloglucan. The polypeptide is Probable xyloglucan galactosyltransferase GT19 (Arabidopsis thaliana (Mouse-ear cress)).